A 250-amino-acid chain; its full sequence is Shieldin complex subunit 3 (250 aa).

The interval 28 to 83 (QDFPTRPLSRFIPWFPYDGSKLPLRPKRSPPVISEEAAEDVKQYLTISEHDAKSHS) is sufficient for interaction with MAD2L2. Over residues 108–119 (LKEQTNSGNLGK) the composition is skewed to polar residues. The disordered stretch occupies residues 108–129 (LKEQTNSGNLGKQSEKGKQHKR).

In terms of assembly, component of the shieldin complex, consisting of SHLD1, SHLD2, SHLD3 and MAD2L2/REV7. Within the complex, SHLD2 forms a scaffold which interacts with a SHLD3-MAD2L2 subcomplex via its N-terminus, and with SHLD1 via its C-terminus. Interacts with ASTE1.

It localises to the chromosome. In terms of biological role, component of the shieldin complex, which plays an important role in repair of DNA double-stranded breaks (DSBs). During G1 and S phase of the cell cycle, the complex functions downstream of TP53BP1 to promote non-homologous end joining (NHEJ) and suppress DNA end resection. Mediates various NHEJ-dependent processes including immunoglobulin class-switch recombination, and fusion of unprotected telomeres. This Homo sapiens (Human) protein is Shieldin complex subunit 3.